A 130-amino-acid chain; its full sequence is Small ribosomal subunit protein uS9 (130 aa).

It belongs to the universal ribosomal protein uS9 family.

The chain is Small ribosomal subunit protein uS9 from Neisseria gonorrhoeae (strain ATCC 700825 / FA 1090).